The sequence spans 961 residues: MDDSENNAPSTPGSPGFSTDRLPPNTTTSRGATDPSSYSDDDDDDVVGAEEAEVDPNVLPEDDGVVAAEEEEDGEDLFNDNYLDDYRRMDEQDQYESVGLDDSIEDERNLDEIMADRRAAEAELDARDVRTGAAPDRKLPRMLHDQDTDEDMSFRRPKRHRANFRPPREPRTPRSDDDGDGATPSSPGRSQRGMYSGGDVPMTDQTDDDPYEDEFDEEDEMNMYRVQGTLREWVTRDEVRRFIAKKFKEFLLTYVNPKNEQGEFEYVRLINEMVLANKCSLEIDYKQFIYIHPNIAIWLADAPQSVLEVMEEVAKNVVFDLHKNYRNIHQKIYVRITNLPVYDQIRNIRQIHLNTMIRIGGVVTRRSGVFPQLQQVKFDCSKCGTVLGPFFQNSYTEVKVGSCPECQSKGPFTINVEQTIYRNYQKLTLQESPGIVPAGRLPRYKEVILLNDLIDCARPGEEIEVTGIYTNNFDLSLNTKNGFPVFATVVEANYVAKKQDLFSAYKLTDEDKAEIEKLAKDPRIGERIVKSIAPSIYGHEDIKTAIALAMFGGQEKNVKGKHRLRGDINVLLLGDPGTAKSQFLKYVEKTGHRAVYTTGKGASAVGLTAAVHKDPVTREWTLEGGALVLADRGICLIDEFDKMNDQDRVSIHEAMEQQSISISKAGIVTSLQARCSVIAAANPIGGRYDSSKTFTQNVELTDPIISRFDVLCVVKDIVDPFTDEMLARFVVDSHARSQPKGANLEDRVPTDVEDDPLAAARQADPDILSQDMLKKYITYAKLNVFPKIHDADLDKISHVYAELRRESSHGQGVPIAVRHIESIIRMSEAHARMHLRSYVSQEDVDMAIRVLLDSFISTQKFGVQKALQKNFRKYMTYKKDYNELLLLLLRTLVKDVLHFEEIVSGPTTRLTHIEVKVEDLKNKAQEYEIYDLRPFFSSAHFRDNNFVLDEGRGIIRHPLAA.

The span at 1 to 17 (MDDSENNAPSTPGSPGF) shows a compositional bias: polar residues. Disordered stretches follow at residues 1-81 (MDDS…FNDN) and 120-220 (AEAE…EEDE). Residues 39–78 (SDDDDDDVVGAEEAEVDPNVLPEDDGVVAAEEEEDGEDLF) show a composition bias toward acidic residues. 2 stretches are compositionally biased toward basic and acidic residues: residues 120 to 146 (AEAE…LHDQ) and 166 to 176 (PPREPRTPRSD). Positions 205–220 (QTDDDPYEDEFDEEDE) are enriched in acidic residues. Residues 380 to 406 (CSKCGTVLGPFFQNSYTEVKVGSCPEC) form a C4-type zinc finger. Residues 524 to 730 (IGERIVKSIA…FTDEMLARFV (207 aa)) form the MCM domain. 574-581 (GDPGTAKS) contacts ATP. Residues 706 to 709 (SRFD) carry the Arginine finger motif.

This sequence belongs to the MCM family. In terms of assembly, component of the minichromosome maintenance (MCM) complex, a heterotetramer composed of MCM2, MCM3, MCM4, MCM5, MCM6 and MCM7. Interacts with CSN5. In terms of tissue distribution, widely expressed, with higher expression in developing tissues.

The protein localises to the nucleus. The catalysed reaction is ATP + H2O = ADP + phosphate + H(+). Probable component of the MCM2-7 complex (MCM complex) that may function as a DNA helicase and which is essential to undergo a single round of replication initiation and elongation per cell cycle in eukaryotic cells. Can complement the fission yeast mcm2 mutant. In Oryza sativa subsp. japonica (Rice), this protein is DNA replication licensing factor MCM2.